Reading from the N-terminus, the 542-residue chain is uncharacterized protein (542 aa).

12 helical membrane-spanning segments follow: residues 12–32 (LVFG…GTVL), 57–77 (FGDV…AILY), 94–114 (VIVM…SWTA), 123–143 (AAAV…AGLA), 168–188 (LFAV…AALV), 191–211 (FVVS…LVTL), 216–236 (IDAP…AFLL), 243–263 (SGVV…PTVI), 277–297 (IATF…IPGA), 313–333 (VLAL…VQAT), 358–378 (VTSW…AVPM), and 391–411 (LIIF…GTSL).

It belongs to the monovalent cation:proton antiporter 1 (CPA1) transporter (TC 2.A.36) family.

Its subcellular location is the cell membrane. This is an uncharacterized protein from Mycobacterium bovis (strain ATCC BAA-935 / AF2122/97).